A 558-amino-acid chain; its full sequence is Formate--tetrahydrofolate ligase (558 aa).

Residue 66–73 participates in ATP binding; it reads TPAGEGKT.

The protein belongs to the formate--tetrahydrofolate ligase family.

It carries out the reaction (6S)-5,6,7,8-tetrahydrofolate + formate + ATP = (6R)-10-formyltetrahydrofolate + ADP + phosphate. It functions in the pathway one-carbon metabolism; tetrahydrofolate interconversion. This is Formate--tetrahydrofolate ligase from Neisseria meningitidis serogroup C / serotype 2a (strain ATCC 700532 / DSM 15464 / FAM18).